Consider the following 466-residue polypeptide: Cysteine--tRNA ligase (466 aa).

Cys28 lines the Zn(2+) pocket. A 'HIGH' region motif is present at residues 30 to 40; that stretch reads PTVYNYIHIGN. Cys208, His233, and Glu237 together coordinate Zn(2+). The 'KMSKS' region signature appears at 265-269; it reads KMSKS. Lys268 serves as a coordination point for ATP.

The protein belongs to the class-I aminoacyl-tRNA synthetase family. Monomer. Zn(2+) is required as a cofactor.

It localises to the cytoplasm. The catalysed reaction is tRNA(Cys) + L-cysteine + ATP = L-cysteinyl-tRNA(Cys) + AMP + diphosphate. In Staphylococcus epidermidis (strain ATCC 35984 / DSM 28319 / BCRC 17069 / CCUG 31568 / BM 3577 / RP62A), this protein is Cysteine--tRNA ligase.